The chain runs to 111 residues: Large ribosomal subunit protein uL22 (111 aa).

Belongs to the universal ribosomal protein uL22 family. As to quaternary structure, part of the 50S ribosomal subunit.

Its function is as follows. This protein binds specifically to 23S rRNA; its binding is stimulated by other ribosomal proteins, e.g. L4, L17, and L20. It is important during the early stages of 50S assembly. It makes multiple contacts with different domains of the 23S rRNA in the assembled 50S subunit and ribosome. In terms of biological role, the globular domain of the protein is located near the polypeptide exit tunnel on the outside of the subunit, while an extended beta-hairpin is found that lines the wall of the exit tunnel in the center of the 70S ribosome. The polypeptide is Large ribosomal subunit protein uL22 (Francisella tularensis subsp. tularensis (strain FSC 198)).